Reading from the N-terminus, the 173-residue chain is 3-hydroxydecanoyl-[acyl-carrier-protein] dehydratase (173 aa).

His-71 is a catalytic residue.

Belongs to the thioester dehydratase family. FabA subfamily. Homodimer.

It is found in the cytoplasm. It catalyses the reaction a (3R)-hydroxyacyl-[ACP] = a (2E)-enoyl-[ACP] + H2O. It carries out the reaction (3R)-hydroxydecanoyl-[ACP] = (2E)-decenoyl-[ACP] + H2O. The enzyme catalyses (2E)-decenoyl-[ACP] = (3Z)-decenoyl-[ACP]. It participates in lipid metabolism; fatty acid biosynthesis. Functionally, necessary for the introduction of cis unsaturation into fatty acids. Catalyzes the dehydration of (3R)-3-hydroxydecanoyl-ACP to E-(2)-decenoyl-ACP and then its isomerization to Z-(3)-decenoyl-ACP. Can catalyze the dehydratase reaction for beta-hydroxyacyl-ACPs with saturated chain lengths up to 16:0, being most active on intermediate chain length. The protein is 3-hydroxydecanoyl-[acyl-carrier-protein] dehydratase of Bradyrhizobium sp. (strain BTAi1 / ATCC BAA-1182).